Here is a 396-residue protein sequence, read N- to C-terminus: Elongation factor Tu (396 aa).

The region spanning 10-207 is the tr-type G domain; it reads KPHCNIGTIG…VDAYIPQPPR (198 aa). The interval 19–26 is G1; that stretch reads GHVDHGKT. GTP is bound at residue 19-26; it reads GHVDHGKT. Residue threonine 26 participates in Mg(2+) binding. The interval 60–64 is G2; that stretch reads GITIS. A G3 region spans residues 81–84; sequence DCPG. GTP-binding positions include 81-85 and 136-139; these read DCPGH and NKVD. Positions 136–139 are G4; the sequence is NKVD. Positions 174–176 are G5; it reads SAL.

Belongs to the TRAFAC class translation factor GTPase superfamily. Classic translation factor GTPase family. EF-Tu/EF-1A subfamily. As to quaternary structure, monomer.

The protein localises to the cytoplasm. The enzyme catalyses GTP + H2O = GDP + phosphate + H(+). In terms of biological role, GTP hydrolase that promotes the GTP-dependent binding of aminoacyl-tRNA to the A-site of ribosomes during protein biosynthesis. The polypeptide is Elongation factor Tu (Novosphingobium aromaticivorans (strain ATCC 700278 / DSM 12444 / CCUG 56034 / CIP 105152 / NBRC 16084 / F199)).